Here is a 259-residue protein sequence, read N- to C-terminus: Methanethiol S-methyltransferase 2 (259 aa).

Transmembrane regions (helical) follow at residues 5 to 25 (LAIL…FLYA), 46 to 66 (LGEA…QHSV), 88 to 108 (TYVL…RPIP), 115 to 135 (SGIA…IAFA), and 182 to 202 (FLLA…FALA).

Belongs to the nurim family.

The protein resides in the membrane. The enzyme catalyses methanethiol + S-adenosyl-L-methionine = dimethyl sulfide + S-adenosyl-L-homocysteine + H(+). Functionally, catalyzes the methylation of methanethiol (MeSH) to yield dimethylsulphide (DMS). The sequence is that of Methanethiol S-methyltransferase 2 from Bradyrhizobium diazoefficiens (strain JCM 10833 / BCRC 13528 / IAM 13628 / NBRC 14792 / USDA 110).